The primary structure comprises 741 residues: Catalase-peroxidase (741 aa).

The segment at residues 86–208 is a cross-link (tryptophyl-tyrosyl-methioninium (Trp-Tyr) (with M-234)); sequence WHSAGSYRIF…FAATEMGLIY (123 aa). His-87 (proton acceptor) is an active-site residue. A cross-link (tryptophyl-tyrosyl-methioninium (Tyr-Met) (with W-86)) is located at residues 208 to 234; sequence YVNPEGPGGNPDPLGSAQEIRVAFRRM. His-249 serves as a coordination point for heme b.

This sequence belongs to the peroxidase family. Peroxidase/catalase subfamily. Homodimer or homotetramer. It depends on heme b as a cofactor. Formation of the three residue Trp-Tyr-Met cross-link is important for the catalase, but not the peroxidase activity of the enzyme.

It catalyses the reaction H2O2 + AH2 = A + 2 H2O. The catalysed reaction is 2 H2O2 = O2 + 2 H2O. In terms of biological role, bifunctional enzyme with both catalase and broad-spectrum peroxidase activity. Also displays NADH oxidase, INH lyase and isonicotinoyl-NAD synthase activities. This is Catalase-peroxidase from Archaeoglobus fulgidus (strain ATCC 49558 / DSM 4304 / JCM 9628 / NBRC 100126 / VC-16).